A 500-amino-acid polypeptide reads, in one-letter code: MNYFPWLTIIVVFPISAGSLMLFLPYRGNKVHKWYTICICILELLLTTYTFCYNFKMNDPLIQLSEDYKWINFLDFYWRLGIDGLSIGTILLTGFITTLAILAAFPVTRDSRLFHFLMLAMYSGQIGSFSSQDLLLFFIMWELELIPVYLLLSMWGGKKRLYSATKFILYTAGSSIFLLIGVLGISLYGSNEPTLNLELLANQSYPVTLEIILYIGFLIAFAVKSPLIPLHTWLPDTHGEAHYSTCMLLAGILLKMGAYGLVRINMELLPHAHSMFSPWLMVVGTIQIIYAASTSPGQRNLKKRIAYSSVSHMGFIIIGIASITDPGLNGAILQIISHGFIGAALFFLAGTSYDRIRLVSLDEMGGMAISIPKIFTMFTILSMASLALPGMSGFVAEFIVFFGIITSQKYLLMAKILIIFVMAIGMILTPIYLLSMSRQMFYGYKLINVQNFSFFDSGPREFFLSISSLLPIIGMGIYPDFVLALASNKVESILSNYFYG.

A run of 14 helical transmembrane segments spans residues 4 to 24 (FPWL…MLFL), 35 to 55 (YTIC…CYNF), 87 to 107 (IGTI…AFPV), 113 to 130 (LFHF…GSFS), 134 to 154 (LLLF…LLSM), 167 to 187 (FILY…GISL), 211 to 231 (IILY…IPLH), 242 to 262 (HYST…YGLV), 272 to 292 (AHSM…IYAA), 305 to 325 (IAYS…SITD), 330 to 350 (GAIL…FLAG), 386 to 406 (LALP…GIIT), 416 to 436 (ILII…LLSM), and 466 to 486 (ISSL…LALA).

Belongs to the complex I subunit 4 family.

It is found in the plastid. Its subcellular location is the chloroplast thylakoid membrane. It carries out the reaction a plastoquinone + NADH + (n+1) H(+)(in) = a plastoquinol + NAD(+) + n H(+)(out). The catalysed reaction is a plastoquinone + NADPH + (n+1) H(+)(in) = a plastoquinol + NADP(+) + n H(+)(out). In Aethionema grandiflorum (Persian stone-cress), this protein is NAD(P)H-quinone oxidoreductase chain 4, chloroplastic.